A 104-amino-acid chain; its full sequence is Pyrimidine/purine nucleoside phosphorylase (104 aa).

Belongs to the nucleoside phosphorylase PpnP family.

The catalysed reaction is a purine D-ribonucleoside + phosphate = a purine nucleobase + alpha-D-ribose 1-phosphate. It catalyses the reaction adenosine + phosphate = alpha-D-ribose 1-phosphate + adenine. It carries out the reaction cytidine + phosphate = cytosine + alpha-D-ribose 1-phosphate. The enzyme catalyses guanosine + phosphate = alpha-D-ribose 1-phosphate + guanine. The catalysed reaction is inosine + phosphate = alpha-D-ribose 1-phosphate + hypoxanthine. It catalyses the reaction thymidine + phosphate = 2-deoxy-alpha-D-ribose 1-phosphate + thymine. It carries out the reaction uridine + phosphate = alpha-D-ribose 1-phosphate + uracil. The enzyme catalyses xanthosine + phosphate = alpha-D-ribose 1-phosphate + xanthine. Functionally, catalyzes the phosphorolysis of diverse nucleosides, yielding D-ribose 1-phosphate and the respective free bases. Can use uridine, adenosine, guanosine, cytidine, thymidine, inosine and xanthosine as substrates. Also catalyzes the reverse reactions. This is Pyrimidine/purine nucleoside phosphorylase from Leptothrix cholodnii (strain ATCC 51168 / LMG 8142 / SP-6) (Leptothrix discophora (strain SP-6)).